Here is a 299-residue protein sequence, read N- to C-terminus: Caspase-1 (299 aa).

A propeptide spanning residues 1–28 is cleaved from the precursor; that stretch reads MLDGKQDNGNVDSVDIKQRTNGGGDEGD. A disordered region spans residues 1–45; the sequence is MLDGKQDNGNVDSVDIKQRTNGGGDEGDALGSNSSSQPNRVARMP. Catalysis depends on residues His-136 and Cys-178. The propeptide occupies 185–195; it reads GGITLSRTETD.

It belongs to the peptidase C14A family. Heterotetramer that consists of two anti-parallel arranged heterodimers, each one formed by a 19/18 kDa (p19/18) and a 12 kDa (p12) subunit. The two subunits are derived from the precursor sequence by an autocatalytic mechanism.

Involved in the activation cascade of caspases responsible for apoptosis execution. Inhibited by the baculovirus anti-apoptotic protein p35. Cleaves p35 and nuclear immunophilin FKBP46. This is Caspase-1 from Spodoptera frugiperda (Fall armyworm).